The chain runs to 917 residues: MDAGFFRGTSAEQDNRFSNKQKKLLKQLKFAECLEKKVDMSKVNLEVIKPWITKRVTEILGFEDDVVIEFIFNQLEVKNPDSKMMQINLTGFLNGKNAREFMGELWPLLLSAQENIAGIPSAFLELKKEEIKQRQIEQEKLASMKKQDEDKDKRDKEEKESSREKRERSRSPRRRKSRSPSPRRRSSPVRRERKRSHSRSPRHRTKSRSPSPAPEKKEKTPELPEPSVKVKEPSVQEATSTSDILKVPKPEPIPEPKEPSPEKNSKKEKEKEKTRPRSRSRSKSRSRTRSRSPSHTRPRRRHRSRSRSYSPRRRPSPRRRPSPRRRTPPRRMPPPPRHRRSRSPVRRRRRSSASLSGSSSSSSSSRSRSPPKKPPKRTSSPPRKTRRLSPSASPPRRRHRPSPPATPPPKTRHSPTPQQSNRTRKSRVSVSPGRTSGKVTKHKGTEKRESPSPAPKPRKVELSESEEDKGGKMAAADSVQQRRQYRRQNQQSSSDSGSSSSSEDERPKRSHVKNGEVGRRRRHSPSRSASPSPRKRQKETSPRMQMGKRWQSPVTKSGRRRRSPSPPPTRRRRSPSPAPPPRRRRTPTPPPRRRTPSPPPRRRSPSPRRYSPPIQRRYSPSPPPKRRTASPPPPPKRRASPSPPPKRRVSHSPPPKQRSSPVTKRRSPSLSSKHRKGSSPSRSTREARSPQPNKRHSPSPRPRAPQTSSPPPVRRGASSSPQRRQSPSPSTRPIRRVSRTPEPKKIKKAASPSPQSVRRVSSSRSVSGSPEPAAKKPPAPTSPVQSQSPSTNWSPAVPVKKAKSPTPSPSPPRNSDQEGGGKKKKKKKDKKHKKDKKHKKHKKHKKEKAVAAAAAAAVTPAAIAAATTTLAQEEPVAAPEPKKETESEAEDNLDDLEKHLREKALRSMRKAQVSPQS.

M1 carries the post-translational modification N-acetylmethionine. Positions 1-151 are necessary for DNA and RNA-binding; the sequence is MDAGFFRGTS…ASMKKQDEDK (151 aa). The segment at 1-156 is necessary for mRNA 3'-end cleavage and cytoplasmic accumulation; the sequence is MDAGFFRGTS…QDEDKDKRDK (156 aa). R7 carries the post-translational modification Citrulline. Residues 27–126 enclose the PWI domain; it reads QLKFAECLEK…AGIPSAFLEL (100 aa). Residue K127 forms a Glycyl lysine isopeptide (Lys-Gly) (interchain with G-Cter in SUMO2) linkage. The segment covering 139-170 has biased composition (basic and acidic residues); the sequence is EKLASMKKQDEDKDKRDKEEKESSREKRERSR. The tract at residues 139–917 is disordered; it reads EKLASMKKQD…MRKAQVSPQS (779 aa). At K140 the chain carries N6-acetyllysine. The span at 171 to 207 shows a compositional bias: basic residues; it reads SPRRRKSRSPSPRRRSSPVRRERKRSHSRSPRHRTKS. The segment covering 214-234 has biased composition (basic and acidic residues); the sequence is PEKKEKTPELPEPSVKVKEPS. T220 bears the Phosphothreonine mark. Residue S227 is modified to Phosphoserine. K231 is covalently cross-linked (Glycyl lysine isopeptide (Lys-Gly) (interchain with G-Cter in SUMO1); alternate). Residue K231 forms a Glycyl lysine isopeptide (Lys-Gly) (interchain with G-Cter in SUMO2); alternate linkage. Residues S234 and S240 each carry the phosphoserine modification. Phosphothreonine is present on T241. Positions 246–275 are enriched in basic and acidic residues; that stretch reads KVPKPEPIPEPKEPSPEKNSKKEKEKEKTR. K249 is covalently cross-linked (Glycyl lysine isopeptide (Lys-Gly) (interchain with G-Cter in SUMO2)). S260 carries the phosphoserine modification. Composition is skewed to basic residues over residues 276–329 and 336–351; these read PRSR…RTPP and PRHR…RRRS. Residues 300 to 702 are necessary for speckles and matrix localization; sequence RRHRSRSRSY…NKRHSPSPRP (403 aa). Residues 352-368 are compositionally biased toward low complexity; the sequence is SASLSGSSSSSSSSRSR. A phosphoserine mark is found at S389, S391, S393, and S402. At T406 the chain carries Phosphothreonine. S414 carries the phosphoserine modification. The residue at position 416 (T416) is a Phosphothreonine. A phosphoserine mark is found at S420, S429, S431, and S436. A compositionally biased stretch (polar residues) spans 428-438; that stretch reads VSVSPGRTSGK. K447 is covalently cross-linked (Glycyl lysine isopeptide (Lys-Gly) (interchain with G-Cter in SUMO2)). Residues S450 and S452 each carry the phosphoserine modification. A Glycyl lysine isopeptide (Lys-Gly) (interchain with G-Cter in SUMO2) cross-link involves residue K459. A phosphoserine mark is found at S463 and S465. Residue K472 forms a Glycyl lysine isopeptide (Lys-Gly) (interchain with G-Cter in SUMO2) linkage. S478 is modified (phosphoserine). A compositionally biased stretch (low complexity) spans 478–501; the sequence is SVQQRRQYRRQNQQSSSDSGSSSS. The segment covering 503 to 518 has biased composition (basic and acidic residues); it reads EDERPKRSHVKNGEVG. Phosphoserine is present on residues S524, S526, S528, S530, S532, S563, and S565. The segment covering 557–574 has biased composition (basic residues); it reads SGRRRRSPSPPPTRRRRS. The residue at position 569 (T569) is a Phosphothreonine. Phosphoserine is present on residues S574 and S576. Positions 581–606 are enriched in basic residues; the sequence is PRRRRTPTPPPRRRTPSPPPRRRSPS. A phosphothreonine mark is found at T586, T588, and T595. S597 carries the phosphoserine modification. Low complexity predominate over residues 607–619; sequence PRRYSPPIQRRYS. At Y610 the chain carries Phosphotyrosine. Residues S611, S619, and S621 each carry the phosphoserine modification. T628 bears the Phosphothreonine mark. S630, S640, S642, S650, and S652 each carry phosphoserine. The segment covering 635 to 650 has biased composition (basic residues); it reads PKRRASPSPPPKRRVS. Basic residues predominate over residues 663 to 677; sequence TKRRSPSLSSKHRKG. A compositionally biased stretch (pro residues) spans 699–713; sequence SPRPRAPQTSSPPPV. Phosphoserine occurs at positions 708, 709, 718, 720, 726, and 728. 3 stretches are compositionally biased toward low complexity: residues 714 to 732, 749 to 772, and 782 to 799; these read RRGA…PSTR, AASP…SPEP, and SPVQ…AVPV. T731 carries the phosphothreonine modification. Phosphoserine is present on residues S751, S753, S761, S765, S767, S769, S782, S786, S788, and S790. The residue at position 791 (T791) is a Phosphothreonine. S794 and S804 each carry phosphoserine. T806 bears the Phosphothreonine mark. 3 positions are modified to phosphoserine: S808, S810, and S815. Over residues 822–847 the composition is skewed to basic residues; the sequence is KKKKKKKDKKHKKDKKHKKHKKHKKE. The segment covering 850–879 has biased composition (low complexity); sequence VAAAAAAAVTPAAIAAATTTLAQEEPVAAP. Residue K882 forms a Glycyl lysine isopeptide (Lys-Gly) (interchain with G-Cter in SUMO2) linkage. The residue at position 885 (T885) is a Phosphothreonine. At S887 the chain carries Phosphoserine. A compositionally biased stretch (basic and acidic residues) spans 895 to 905; the sequence is DLEKHLREKAL. S914 carries the post-translational modification Phosphoserine.

It belongs to the splicing factor SR family. Identified in the spliceosome C complex. Found in a pre-mRNA splicing complex with SFRS4, SFRS5, SNRP70, SNRPA1, SRRM1 and SRRM2. Component of the minor spliceosome, which splices U12-type introns. Found in a pre-mRNA exonic splicing enhancer (ESE) complex with SNRP70, SNRPA1, SRRM1 and TRA2B/SFRS10. Found in a mRNA splicing-dependent exon junction complex (EJC) with DEK, PRPF8, NCBP1, RBM8A, RNPS1, SRRM1 and ALYREF/THOC4. Interacts with DDX39B, CPSF1, RBM8A, RNPS1, and ALYREF/THOC4. Seems to be a compound of RNA export complexes that are released from speckles in a ATP-dependent manner. Phosphorylated on multiple serine and threonine residues by DYRK3 during the G2-to-M transition, after the nuclear-envelope breakdown. Phosphorylation by DYRK3 promotes disassembly of nuclear speckles. Post-translationally, citrullinated by PADI4.

Part of pre- and post-splicing multiprotein mRNP complexes. As a component of the minor spliceosome, involved in the splicing of U12-type introns in pre-mRNAs. Involved in numerous pre-mRNA processing events. Promotes constitutive and exonic splicing enhancer (ESE)-dependent splicing activation by bridging together sequence-specific (SR family proteins, SFRS4, SFRS5 and TRA2B/SFRS10) and basal snRNP (SNRP70 and SNRPA1) factors of the spliceosome. Stimulates mRNA 3'-end cleavage independently of the formation of an exon junction complex. Binds both pre-mRNA and spliced mRNA 20-25 nt upstream of exon-exon junctions. Binds RNA and DNA with low sequence specificity and has similar preference for either double- or single-stranded nucleic acid substrates. This chain is Serine/arginine repetitive matrix protein 1 (SRRM1), found in Pongo abelii (Sumatran orangutan).